The sequence spans 360 residues: Thioredoxin domain-containing protein 15 (360 aa).

Residues 1–32 (MVPAAGRRPPRVMRLLGWWQVLLWVLGLPVRG) form the signal peptide. The Extracellular portion of the chain corresponds to 33 to 321 (VEVAEESGRL…GPLPSTLIKS (289 aa)). Residues 141–173 (PDREEEYYTEPEVAESDAAPTEDSNNTESLKSP) form a disordered region. Residues 143 to 155 (REEEYYTEPEVAE) are compositionally biased toward acidic residues. Positions 153 to 296 (VAESDAAPTE…LKIFIFNQTG (144 aa)) constitute a Thioredoxin domain. Asparagine 187, asparagine 194, asparagine 206, and asparagine 293 each carry an N-linked (GlcNAc...) asparagine glycan. Residues 322-342 (VDWLLVFSLFFLISFIMYATI) traverse the membrane as a helical segment. The Cytoplasmic segment spans residues 343–360 (RTESIRWLIPGQEQEHVE).

It localises to the cell projection. The protein localises to the cilium membrane. Functionally, acts as a positive regulator of ciliary hedgehog signaling. Involved in ciliogenesis. This chain is Thioredoxin domain-containing protein 15 (TXNDC15), found in Homo sapiens (Human).